The following is a 284-amino-acid chain: NADH-cytochrome b5 reductase 1 (284 aa).

Residues 7 to 27 (KLVVVIVIVVVPLLFKFIIGP) form a helical membrane-spanning segment. The region spanning 38–142 (NDFQSFPLVE…KGPRGNYHYE (105 aa)) is the FAD-binding FR-type domain. 148-180 (HLGMIAGGTGIAPMYQIMKAIAMDSHDTTKVSL) serves as a coordination point for FAD.

This sequence belongs to the flavoprotein pyridine nucleotide cytochrome reductase family. As to quaternary structure, monomer. Component of the 2-(3-amino-3-carboxypropyl)histidine synthase complex composed of DPH1, DPH2, KTI11/DPH3 and a NADH-dependent reductase, predominantly CBR1. Interacts with KTI11/DPH3. Interacts with STE20. FAD is required as a cofactor.

The protein resides in the mitochondrion outer membrane. It catalyses the reaction 2 Fe(III)-[cytochrome b5] + NADH = 2 Fe(II)-[cytochrome b5] + NAD(+) + H(+). The catalysed reaction is 2 Fe(3+)-[Dph3] + NADH = 2 Fe(2+)-[Dph3] + NAD(+) + H(+). It functions in the pathway protein modification; peptidyl-diphthamide biosynthesis. Competitively inhibited by NAD(+). Inhibited by mercurials such as p-chloromercuribenzoate (PCMB) and HgCl(2). Enzymatic activity increases under anaerobic conditions. Its function is as follows. NADH-dependent reductase for KTI11/DPH3 and cytochrome b5. Required for the first step of diphthamide biosynthesis, a post-translational modification of histidine which occurs in elongation factor 2. DPH1 and DPH2 transfer a 3-amino-3-carboxypropyl (ACP) group from S-adenosyl-L-methionine (SAM) to a histidine residue, the reaction is assisted by a reduction system comprising KTI11/DPH3 and a NADH-dependent reductase, predominantly CBR1. By reducing KTI11/DPH3, also involved in the formation of the tRNA wobble base modification mcm5s 2U (5-methoxycarbonylmethyl-2-thiouridine), mediated by the elongator complex. The cytochrome b5/NADH cytochrome b5 reductase electron transfer system supports the catalytic activity of several sterol biosynthetic enzymes. Plays a role in bud morphology. The sequence is that of NADH-cytochrome b5 reductase 1 (CBR1) from Saccharomyces cerevisiae (strain YJM789) (Baker's yeast).